Consider the following 920-residue polypeptide: Protein translocase subunit SecA (920 aa).

Residues Gln85, 103 to 107 (GEGKT), and Asp514 contribute to the ATP site. Zn(2+) is bound by residues Cys904, Cys906, Cys915, and His916.

Belongs to the SecA family. As to quaternary structure, monomer and homodimer. Part of the essential Sec protein translocation apparatus which comprises SecA, SecYEG and auxiliary proteins SecDF-YajC and YidC. Zn(2+) serves as cofactor.

Its subcellular location is the cell inner membrane. The protein resides in the cytoplasm. It carries out the reaction ATP + H2O + cellular proteinSide 1 = ADP + phosphate + cellular proteinSide 2.. Part of the Sec protein translocase complex. Interacts with the SecYEG preprotein conducting channel. Has a central role in coupling the hydrolysis of ATP to the transfer of proteins into and across the cell membrane, serving both as a receptor for the preprotein-SecB complex and as an ATP-driven molecular motor driving the stepwise translocation of polypeptide chains across the membrane. The sequence is that of Protein translocase subunit SecA from Janthinobacterium sp. (strain Marseille) (Minibacterium massiliensis).